A 461-amino-acid chain; its full sequence is Cysteine--tRNA ligase (461 aa).

Residue C28 participates in Zn(2+) binding. A 'HIGH' region motif is present at residues 30-40 (ITVYDLCHIGH). Zn(2+) is bound by residues C209, H234, and E238. The 'KMSKS' region motif lies at 266 to 270 (KMSKS). K269 is a binding site for ATP.

This sequence belongs to the class-I aminoacyl-tRNA synthetase family. As to quaternary structure, monomer. Zn(2+) serves as cofactor.

Its subcellular location is the cytoplasm. It catalyses the reaction tRNA(Cys) + L-cysteine + ATP = L-cysteinyl-tRNA(Cys) + AMP + diphosphate. The protein is Cysteine--tRNA ligase of Escherichia coli (strain SMS-3-5 / SECEC).